A 749-amino-acid chain; its full sequence is Protein lin-54 homolog (749 aa).

A Glycyl lysine isopeptide (Lys-Gly) (interchain with G-Cter in SUMO2) cross-link involves residue lysine 139. N6-acetyllysine is present on residues lysine 244 and lysine 249. 4 positions are modified to phosphoserine: serine 264, serine 282, serine 310, and serine 314. Lysine 357 is covalently cross-linked (Glycyl lysine isopeptide (Lys-Gly) (interchain with G-Cter in SUMO2)). The segment at alanine 369 to glutamine 388 is disordered. The region spanning proline 521–glutamate 634 is the CRC domain. The segment at lysine 523–tyrosine 536 is DNA-binding. Zn(2+)-binding residues include cysteine 525, cysteine 527, cysteine 532, cysteine 537, cysteine 539, cysteine 546, cysteine 549, cysteine 551, and cysteine 554. The linker stretch occupies residues isoleucine 583–serine 596. Positions 599, 601, 606, 611, 613, 620, 624, 626, and 629 each coordinate Zn(2+). The interval cysteine 599–glutamate 612 is DNA-binding. Position 635 is a phosphoserine (serine 635). Residues lysine 639, lysine 659, and lysine 661 each participate in a glycyl lysine isopeptide (Lys-Gly) (interchain with G-Cter in SUMO2) cross-link.

This sequence belongs to the lin-54 family. In terms of assembly, component of the DREAM complex (also named LINC complex) at least composed of E2F4, E2F5, LIN9, LIN37, LIN52, LIN54, MYBL1, MYBL2, RBL1, RBL2, RBBP4, TFDP1 and TFDP2. The complex exists in quiescent cells where it represses cell cycle-dependent genes. It dissociates in S phase when LIN9, LIN37, LIN52 and LIN54 form a subcomplex that binds to MYBL2.

It is found in the nucleus. Functionally, component of the DREAM complex, a multiprotein complex that can both act as a transcription activator or repressor depending on the context. In G0 phase, the complex binds to more than 800 promoters and is required for repression of E2F target genes. In S phase, the complex selectively binds to the promoters of G2/M genes whose products are required for mitosis and participates in their cell cycle dependent activation. In the complex, acts as a DNA-binding protein that binds the promoter of CDK1 in a sequence-specific manner. Specifically recognizes the consensus motif 5'-TTYRAA-3' in target DNA. The polypeptide is Protein lin-54 homolog (LIN54) (Homo sapiens (Human)).